The following is a 302-amino-acid chain: Zinc transporter ZIP1 (302 aa).

At 1–6 (MDYLLQ) the chain is on the extracellular side. The chain crosses the membrane as a helical span at residues 7 to 27 (VKVGALVGLLLLTLFFGFIPA). The Cytoplasmic segment spans residues 28–44 (RMKWFHVTGGTELHKAV). A helical membrane pass occupies residues 45–65 (LSFVSCFAGGVFLSACLLDII). Topologically, residues 66 to 86 (PDYLSDIHGELQKRDLDDGFP) are extracellular. The chain crosses the membrane as a helical span at residues 87–107 (LPEFIMACGFFTVLILEKMVL). The Cytoplasmic segment spans residues 108-158 (SCTEGHRNEETAPLLAPAAPNGHAHGHPSVNDLEGSGHHVHVDFHAHSSFR). The helical transmembrane segment at 159–179 (SFMLFLSLSLHSVFEGLAIGL) threads the bilayer. Residues 180–185 (QTTNAK) lie on the Extracellular side of the membrane. Residues 186-206 (VLEICIAILVHKSIIVFSLSV) traverse the membrane as a helical segment. The Cytoplasmic portion of the chain corresponds to 207–219 (KLVQSAVKPLWVV). Residues 220–240 (LYVTVFAIMSPLGIGIGIVVI) form a helical membrane-spanning segment. At 241 to 247 (ETERQAG) the chain is on the extracellular side. A helical membrane pass occupies residues 248 to 268 (GLIQAVLEGLAAGTFIYITFL). Residues 269-281 (EILPHELNSSERP) lie on the Cytoplasmic side of the membrane. A helical membrane pass occupies residues 282 to 302 (LLKVLFLLCGFSIMAALCFLG).

The protein belongs to the ZIP transporter (TC 2.A.5) family. Ubiquitous. Highest levels in ovary, high levels in heart, eye, kidney and brain, moderate levels in intestine and low levels in gill and skin.

It localises to the cell membrane. It is found in the endoplasmic reticulum membrane. It catalyses the reaction Zn(2+)(in) = Zn(2+)(out). Its function is as follows. Transporter for the divalent cation Zn(2+). Mediates the influx of Zn(2+) into cells from extracellular space. The sequence is that of Zinc transporter ZIP1 (slc39a1) from Danio rerio (Zebrafish).